Consider the following 449-residue polypeptide: NADH-quinone oxidoreductase subunit F (449 aa).

Residue 67 to 76 (GRGGAGFPTG) participates in NAD(+) binding. Position 179 to 226 (179 to 226 (GAGAYICGEETALLDSLEGRRGQPRLRPPFPAVAGLYACPTVVNNVES)) interacts with FMN. The [4Fe-4S] cluster site is built by Cys-355, Cys-358, Cys-361, and Cys-401.

It belongs to the complex I 51 kDa subunit family. Requires FMN as cofactor. [4Fe-4S] cluster is required as a cofactor.

It catalyses the reaction a quinone + NADH + 5 H(+)(in) = a quinol + NAD(+) + 4 H(+)(out). Its function is as follows. NDH-1 shuttles electrons from NADH, via FMN and iron-sulfur (Fe-S) centers, to quinones in the respiratory chain. Couples the redox reaction to proton translocation (for every two electrons transferred, four hydrogen ions are translocated across the cytoplasmic membrane), and thus conserves the redox energy in a proton gradient. The chain is NADH-quinone oxidoreductase subunit F (nuoF) from Streptomyces coelicolor (strain ATCC BAA-471 / A3(2) / M145).